A 476-amino-acid polypeptide reads, in one-letter code: Aspartyl/glutamyl-tRNA(Asn/Gln) amidotransferase subunit B (476 aa).

Belongs to the GatB/GatE family. GatB subfamily. In terms of assembly, heterotrimer of A, B and C subunits.

It catalyses the reaction L-glutamyl-tRNA(Gln) + L-glutamine + ATP + H2O = L-glutaminyl-tRNA(Gln) + L-glutamate + ADP + phosphate + H(+). The catalysed reaction is L-aspartyl-tRNA(Asn) + L-glutamine + ATP + H2O = L-asparaginyl-tRNA(Asn) + L-glutamate + ADP + phosphate + 2 H(+). Allows the formation of correctly charged Asn-tRNA(Asn) or Gln-tRNA(Gln) through the transamidation of misacylated Asp-tRNA(Asn) or Glu-tRNA(Gln) in organisms which lack either or both of asparaginyl-tRNA or glutaminyl-tRNA synthetases. The reaction takes place in the presence of glutamine and ATP through an activated phospho-Asp-tRNA(Asn) or phospho-Glu-tRNA(Gln). This Clostridium botulinum (strain Loch Maree / Type A3) protein is Aspartyl/glutamyl-tRNA(Asn/Gln) amidotransferase subunit B.